The sequence spans 236 residues: Uridylate kinase (236 aa).

10–13 (KLSG) provides a ligand contact to ATP. Glycine 52 is a binding site for UMP. ATP-binding residues include glycine 53 and arginine 57. UMP is bound by residues aspartate 72 and 133–140 (TGNPFFTT). The ATP site is built by threonine 160, tyrosine 166, and aspartate 169.

This sequence belongs to the UMP kinase family. As to quaternary structure, homohexamer.

It is found in the cytoplasm. It carries out the reaction UMP + ATP = UDP + ADP. It functions in the pathway pyrimidine metabolism; CTP biosynthesis via de novo pathway; UDP from UMP (UMPK route): step 1/1. Its activity is regulated as follows. Inhibited by UTP. In terms of biological role, catalyzes the reversible phosphorylation of UMP to UDP. The chain is Uridylate kinase from Bacteroides thetaiotaomicron (strain ATCC 29148 / DSM 2079 / JCM 5827 / CCUG 10774 / NCTC 10582 / VPI-5482 / E50).